The chain runs to 359 residues: Probable mannitol dehydrogenase (359 aa).

Zn(2+)-binding residues include Cys50, His72, Cys103, Cys106, Cys109, Cys117, and Cys165.

It belongs to the zinc-containing alcohol dehydrogenase family. It depends on Zn(2+) as a cofactor.

It carries out the reaction D-mannitol + NAD(+) = D-mannose + NADH + H(+). Functionally, oxidizes mannitol to mannose. Provides the initial step by which translocated mannitol is committed to central metabolism and, by regulating mannitol pool size, is important in regulating salt tolerance at the cellular level. This chain is Probable mannitol dehydrogenase (CAD1), found in Medicago sativa (Alfalfa).